A 124-amino-acid polypeptide reads, in one-letter code: Small ribosomal subunit protein uS12 (124 aa).

The interval 1–25 (MPTINQLIRKPRKSQKEKTASPALQ) is disordered. Position 89 is a 3-methylthioaspartic acid (aspartate 89).

This sequence belongs to the universal ribosomal protein uS12 family. As to quaternary structure, part of the 30S ribosomal subunit. Contacts proteins S8 and S17. May interact with IF1 in the 30S initiation complex.

In terms of biological role, with S4 and S5 plays an important role in translational accuracy. Its function is as follows. Interacts with and stabilizes bases of the 16S rRNA that are involved in tRNA selection in the A site and with the mRNA backbone. Located at the interface of the 30S and 50S subunits, it traverses the body of the 30S subunit contacting proteins on the other side and probably holding the rRNA structure together. The combined cluster of proteins S8, S12 and S17 appears to hold together the shoulder and platform of the 30S subunit. The chain is Small ribosomal subunit protein uS12 from Borrelia duttonii (strain Ly).